Consider the following 510-residue polypeptide: tRNA-2-methylthio-N(6)-dimethylallyladenosine synthase (510 aa).

The segment at Met-1–Gly-25 is disordered. Positions Arg-34–His-154 constitute an MTTase N-terminal domain. [4Fe-4S] cluster-binding residues include Cys-43, Cys-79, Cys-117, Cys-195, Cys-199, and Cys-202. Residues Ala-181–Ala-414 form the Radical SAM core domain. Residues Lys-417–Ala-479 enclose the TRAM domain. Over residues Gln-484–Ala-493 the composition is skewed to polar residues. Residues Gln-484–Val-510 form a disordered region.

This sequence belongs to the methylthiotransferase family. MiaB subfamily. In terms of assembly, monomer. The cofactor is [4Fe-4S] cluster.

The protein localises to the cytoplasm. The catalysed reaction is N(6)-dimethylallyladenosine(37) in tRNA + (sulfur carrier)-SH + AH2 + 2 S-adenosyl-L-methionine = 2-methylsulfanyl-N(6)-dimethylallyladenosine(37) in tRNA + (sulfur carrier)-H + 5'-deoxyadenosine + L-methionine + A + S-adenosyl-L-homocysteine + 2 H(+). In terms of biological role, catalyzes the methylthiolation of N6-(dimethylallyl)adenosine (i(6)A), leading to the formation of 2-methylthio-N6-(dimethylallyl)adenosine (ms(2)i(6)A) at position 37 in tRNAs that read codons beginning with uridine. This Beijerinckia indica subsp. indica (strain ATCC 9039 / DSM 1715 / NCIMB 8712) protein is tRNA-2-methylthio-N(6)-dimethylallyladenosine synthase.